A 119-amino-acid polypeptide reads, in one-letter code: Evasin P983 (119 aa).

The first 21 residues, 1–21 (MKASFCVIASCLVVFALKGTA), serve as a signal peptide directing secretion. Intrachain disulfides connect cysteine 37/cysteine 59, cysteine 55/cysteine 97, cysteine 72/cysteine 102, and cysteine 92/cysteine 111. Asparagine 48 and asparagine 67 each carry an N-linked (GlcNAc...) asparagine glycan.

It is found in the secreted. Salivary chemokine-binding protein which binds to host chemokines CCL2, CCL3 and CCL8. In Amblyomma cajennense (Cayenne tick), this protein is Evasin P983.